The primary structure comprises 1091 residues: ATP-citrate synthase (1091 aa).

The 262-residue stretch at 4–265 folds into the ATP-grasp domain; that stretch reads KAISEQTGKE…LDAKSGASLK (262 aa). Positions 58, 66, 67, 109, 111, and 118 each coordinate ATP. Residue Tyr-131 is modified to Phosphotyrosine. ATP is bound at residue Asp-216. Mg(2+) is bound by residues Asp-257, Ser-260, and Ala-262. The residue at position 263 (Ser-263) is a Phosphoserine. Citrate contacts are provided by Gly-309, Asn-346, Thr-348, Tyr-364, and Arg-379. Residues 442 to 457 show a composition bias toward low complexity; it reads SGSTSTPAPSRTASFS. The segment at 442–471 is disordered; the sequence is SGSTSTPAPSRTASFSESRTDEVAPAKKAK. Thr-447 is modified (phosphothreonine). Phosphoserine is present on Ser-451. The residue at position 455 (Ser-455) is a Phosphoserine; by PKA and PKB/AKT1 or PKB/AKT2 or BCKDK. Phosphoserine is present on Ser-459. N6-acetyllysine; alternate is present on residues Lys-530, Lys-536, and Lys-544. Glycyl lysine isopeptide (Lys-Gly) (interchain with G-Cter in ubiquitin); alternate cross-links involve residues Lys-530, Lys-536, and Lys-544. The residue at position 629 (Thr-629) is a Phosphothreonine. Phosphoserine is present on Ser-653. Residue Tyr-672 is modified to Phosphotyrosine. His-750 (tele-phosphohistidine intermediate) is an active-site residue. 769-779 lines the CoA pocket; that stretch reads LKEAGVFVPRS. Ser-829 carries the post-translational modification Phosphoserine. N6-acetyllysine occurs at positions 938, 958, 968, and 1067. The residue at position 1090 (Ser-1090) is a Phosphoserine.

In the N-terminal section; belongs to the succinate/malate CoA ligase beta subunit family. It in the C-terminal section; belongs to the succinate/malate CoA ligase alpha subunit family. As to quaternary structure, homotetramer. It depends on Mg(2+) as a cofactor. In terms of processing, phosphorylated by PKA and GSK3 in a sequential manner; phosphorylation results in activation of its activity. Phosphorylation on Thr-447 and Ser-451 depends on the phosphorylation state of Ser-455. Phosphorylation on Ser-455 is decreased by prior phosphorylation on the other 2 residues. Phosphorylated at Ser-455 by BCKDK and dephosphorylated by protein phosphatase PPM1K. ISGylated. Post-translationally, acetylated at Lys-530, Lys-536 and Lys-544 by KAT2B/PCAF. Acetylation is promoted by glucose and stabilizes the protein, probably by preventing ubiquitination at the same sites. Acetylation promotes de novo lipid synthesis. Deacetylated by SIRT2. In terms of processing, ubiquitinated at Lys-530, Lys-536 and Lys-544 by the BCR(KLHL25) E3 ubiquitin ligase complex and UBR4, leading to its degradation. Ubiquitination is probably inhibited by acetylation at same site. BCR(KLHL25)-mediated degradation of ACLY promotes fatty acid oxidation and is required for differentiation of inducible regulatory T (iTreg) cells.

Its subcellular location is the cytoplasm. It is found in the cytosol. The catalysed reaction is oxaloacetate + acetyl-CoA + ADP + phosphate = citrate + ATP + CoA. Its activity is regulated as follows. Phosphorylation results in activation of its activity. Glucose 6-phosphate, fructose 6-phosphate, fructose 2,6-bisphosphate, ribulose 5-phosphate, and fructose 1,6-bisphosphate also act as activators. In terms of biological role, catalyzes the cleavage of citrate into oxaloacetate and acetyl-CoA, the latter serving as common substrate in multiple biochemical reactions in protein, carbohydrate and lipid metabolism. The protein is ATP-citrate synthase (ACLY) of Bos taurus (Bovine).